Consider the following 91-residue polypeptide: Probable Fe(2+)-trafficking protein (91 aa).

Belongs to the Fe(2+)-trafficking protein family.

Functionally, could be a mediator in iron transactions between iron acquisition and iron-requiring processes, such as synthesis and/or repair of Fe-S clusters in biosynthetic enzymes. The protein is Probable Fe(2+)-trafficking protein of Actinobacillus pleuropneumoniae serotype 5b (strain L20).